A 953-amino-acid chain; its full sequence is 26S proteasome non-ATPase regulatory subunit 1 (953 aa).

Met1 is subject to N-acetylmethionine; partial. Thr273 is modified (phosphothreonine). The interval 279-318 (PGSTNTGTVPGSEKDSDSMETEEKTGSAFVGKTPEASPEP) is disordered. Position 290 is a phosphoserine (Ser290). Residues 290 to 303 (SEKDSDSMETEEKT) show a composition bias toward basic and acidic residues. An N6-acetyllysine modification is found at Lys310. Residue Thr311 is modified to Phosphothreonine. Ser315 bears the Phosphoserine mark. 10 PC repeats span residues 403–436 (TATASLGVIHKGHEKEALQLMATYLPKDTSPGSA), 441–474 (GGLYALGLIHANHGGDIIDYLLNQLKNASNDIVR), 476–510 (GGSLGLGLAAMGTARQDVYDLLKTNLYQDDAVTGE), 511–545 (AAGLALGLVMLGSKNAQAIEDMVGYAQETQHEKIL), 547–580 (GLAVGIALVMYGRMEEADALIESLCRDKDPILRR), 581–616 (SGMYTVAMAYCGSGNNKAIRRLLHVAVSDVNDDVRR), 617–649 (AAVESLGFILFRTPEQCPSVVSLLSESYNPHVR), 651–685 (GAAMALGICCAGTGNKEAINLLEPMTNDPVNYVRQ), 686–726 (GALI…DVMA), and 729–761 (GAILAQGILDAGGHNVTISLQSRTGHTHMPSVV). N6-acetyllysine is present on Lys720. A Phosphothreonine modification is found at Thr830. Position 834 is a phosphoserine (Ser834). 2 disordered regions span residues 839 to 881 (AKKK…LDNP) and 930 to 953 (AHGPKIEEEEQEPEPPEPFEYIDD). 2 stretches are compositionally biased toward basic and acidic residues: residues 842–852 (KEKEKEKKEEE) and 859–872 (AEKKEEKEKKKEPE). Over residues 936–953 (EEEEQEPEPPEPFEYIDD) the composition is skewed to acidic residues.

It belongs to the proteasome subunit S1 family. In terms of assembly, component of the 19S proteasome regulatory particle complex. The 26S proteasome consists of a 20S core particle (CP) and two 19S regulatory subunits (RP). The regulatory particle is made of a lid composed of 9 subunits, a base containing 6 ATPases and few additional components including PSMD1. Interacts with ADRM1. Interacts with ZFAND1.

Its function is as follows. Component of the 26S proteasome, a multiprotein complex involved in the ATP-dependent degradation of ubiquitinated proteins. This complex plays a key role in the maintenance of protein homeostasis by removing misfolded or damaged proteins, which could impair cellular functions, and by removing proteins whose functions are no longer required. Therefore, the proteasome participates in numerous cellular processes, including cell cycle progression, apoptosis, or DNA damage repair. The sequence is that of 26S proteasome non-ATPase regulatory subunit 1 (PSMD1) from Pongo abelii (Sumatran orangutan).